The chain runs to 251 residues: MRKPIIAGNWKMNKTAAKAGQFAEDVKNNVPSSDAVESVVAAPALFLQELVRLTEGTDLRVSAQNCYFEDEGAFTGEISPFALADLGVSYVIIGHSERREYFHETDEDINKKAHAIFKHGMTPIICCGETLDQREAGQTDTWVRGQIRAALAGLTEEQVIKSVIAYEPIWAIGTGKSSTSADANETCAVIRAEVADAVSQKAADAVRIQYGGSVKPENIADYLAESDIDGALVGGASLEPASFLALLEAVK.

9–11 (NWK) is a binding site for substrate. His-95 acts as the Electrophile in catalysis. Residue Glu-167 is the Proton acceptor of the active site. Residues Gly-173, Ser-213, and 234–235 (GG) contribute to the substrate site.

This sequence belongs to the triosephosphate isomerase family. Homodimer.

It localises to the cytoplasm. The catalysed reaction is D-glyceraldehyde 3-phosphate = dihydroxyacetone phosphate. The protein operates within carbohydrate biosynthesis; gluconeogenesis. Its pathway is carbohydrate degradation; glycolysis; D-glyceraldehyde 3-phosphate from glycerone phosphate: step 1/1. Functionally, involved in the gluconeogenesis. Catalyzes stereospecifically the conversion of dihydroxyacetone phosphate (DHAP) to D-glyceraldehyde-3-phosphate (G3P). The polypeptide is Triosephosphate isomerase 1 (Listeria monocytogenes serovar 1/2a (strain ATCC BAA-679 / EGD-e)).